Here is a 40-residue protein sequence, read N- to C-terminus: Dolichyl-diphosphooligosaccharide--protein glycosyltransferase subunit 4 (40 aa).

At 1–4 the chain is on the lumenal side; it reads MITD. A helical membrane pass occupies residues 5 to 25; the sequence is VQLAIFSNVLGVFLFLLVVAY. The Cytoplasmic portion of the chain corresponds to 26–40; it reads HYINANTGKPIPKAK.

The protein belongs to the OST4 family. Component of the oligosaccharyltransferase (OST) complex.

It is found in the endoplasmic reticulum membrane. Functionally, subunit of the oligosaccharyl transferase (OST) complex that catalyzes the initial transfer of a defined glycan (Glc(3)Man(9)GlcNAc(2) in eukaryotes) from the lipid carrier dolichol-pyrophosphate to an asparagine residue within an Asn-X-Ser/Thr consensus motif in nascent polypeptide chains, the first step in protein N-glycosylation. N-glycosylation occurs cotranslationally and the complex associates with the Sec61 complex at the channel-forming translocon complex that mediates protein translocation across the endoplasmic reticulum (ER). All subunits are required for a maximal enzyme activity. The protein is Dolichyl-diphosphooligosaccharide--protein glycosyltransferase subunit 4 of Drosophila ananassae (Fruit fly).